Consider the following 325-residue polypeptide: Putative metal ion transporter ZIPCO (325 aa).

3 helical membrane-spanning segments follow: residues 5–25 (TFLALLIFVECVIVVYIPAYI), 46–66 (IASGAILALAFLHMLPEVIIL), and 74–94 (LYYIFILVLVSVTFLNITDIL). Residues Asn106 and Asn160 are each glycosylated (N-linked (GlcNAc...) asparagine). A run of 4 helical transmembrane segments spans residues 179–199 (FFIVLSLFIHSFIEGLLMGSL), 239–259 (IYAWSFILSLPLGVFIAIFSF), 264–284 (FVEIIFSSIACGFFLYLSFNM), and 296–316 (HFISFSYFLGVGGMSTLMILF).

It is found in the cytoplasmic vesicle membrane. In terms of biological role, putative transporter for the divalent zinc and iron cations. The protein is Putative metal ion transporter ZIPCO of Plasmodium falciparum (isolate 3D7).